The chain runs to 356 residues: MSIANLARRVVRALTPYQSARRIGGKGHVWLNANEAPLAYPFTIEGGRLNRYPECQPAEVVNGYAAYAGVNPDQVLVSRGADEAIELLIRTFCEAGEDQILICPPTYGMYAISAETCGVGIVEQPLTTSRQPDWPAIADRLSDVKLVFLCSPNNPTGDLVGRDGLIALLEKARDRAIVVVDEAYIEFCPEASVVDLLARFPNLVVTRTLSKAFALAGIRCGFTLASPEVIAMLAKVIAPYPIPEPIAQIAAQALSPMGLELMQERVVELNKQKAAFKAALATLHCVKEVFEDKGNFVLVRFVDGAAVFAAMKAAGIILRDFSTKPGLDNSIRVTIGYQGEMDAVLAVLRDLPSPSF.

N6-(pyridoxal phosphate)lysine is present on Lys-211.

This sequence belongs to the class-II pyridoxal-phosphate-dependent aminotransferase family. Histidinol-phosphate aminotransferase subfamily. Homodimer. It depends on pyridoxal 5'-phosphate as a cofactor.

The enzyme catalyses L-histidinol phosphate + 2-oxoglutarate = 3-(imidazol-4-yl)-2-oxopropyl phosphate + L-glutamate. It participates in amino-acid biosynthesis; L-histidine biosynthesis; L-histidine from 5-phospho-alpha-D-ribose 1-diphosphate: step 7/9. This chain is Histidinol-phosphate aminotransferase, found in Aeromonas hydrophila subsp. hydrophila (strain ATCC 7966 / DSM 30187 / BCRC 13018 / CCUG 14551 / JCM 1027 / KCTC 2358 / NCIMB 9240 / NCTC 8049).